Here is a 1121-residue protein sequence, read N- to C-terminus: uncharacterized protein (1121 aa).

Positions 179 to 198 are disordered; it reads GPGECQSVHNQSSGSGSNSY. N-linked (GlcNAc...) asparagine; by host glycosylation is found at Asn188, Asn325, Asn351, Asn449, Asn561, and Asn615. Disordered stretches follow at residues 649–684 and 701–734; these read KRIH…RIHN and STRQ…TDSD. Positions 701-715 are enriched in polar residues; the sequence is STRQDASGGSSSGTK. Asn838, Asn911, Asn914, and Asn980 each carry an N-linked (GlcNAc...) asparagine; by host glycan.

Belongs to the herpesviridae US22 family.

This is an uncharacterized protein from Homo sapiens (Human).